A 196-amino-acid polypeptide reads, in one-letter code: Probable malonic semialdehyde reductase RutE (196 aa).

The protein belongs to the nitroreductase family. HadB/RutE subfamily. The cofactor is FMN.

The catalysed reaction is 3-hydroxypropanoate + NADP(+) = 3-oxopropanoate + NADPH + H(+). Functionally, may reduce toxic product malonic semialdehyde to 3-hydroxypropionic acid, which is excreted. This Escherichia coli O139:H28 (strain E24377A / ETEC) protein is Probable malonic semialdehyde reductase RutE.